The primary structure comprises 126 residues: Holo-[acyl-carrier-protein] synthase (126 aa).

Residues Asp9 and Glu58 each contribute to the Mg(2+) site.

The protein belongs to the P-Pant transferase superfamily. AcpS family. The cofactor is Mg(2+).

The protein resides in the cytoplasm. The enzyme catalyses apo-[ACP] + CoA = holo-[ACP] + adenosine 3',5'-bisphosphate + H(+). Functionally, transfers the 4'-phosphopantetheine moiety from coenzyme A to a Ser of acyl-carrier-protein. The protein is Holo-[acyl-carrier-protein] synthase of Escherichia fergusonii (strain ATCC 35469 / DSM 13698 / CCUG 18766 / IAM 14443 / JCM 21226 / LMG 7866 / NBRC 102419 / NCTC 12128 / CDC 0568-73).